Consider the following 95-residue polypeptide: Aspartyl/glutamyl-tRNA(Asn/Gln) amidotransferase subunit C (95 aa).

The protein belongs to the GatC family. As to quaternary structure, heterotrimer of A, B and C subunits.

It carries out the reaction L-glutamyl-tRNA(Gln) + L-glutamine + ATP + H2O = L-glutaminyl-tRNA(Gln) + L-glutamate + ADP + phosphate + H(+). The catalysed reaction is L-aspartyl-tRNA(Asn) + L-glutamine + ATP + H2O = L-asparaginyl-tRNA(Asn) + L-glutamate + ADP + phosphate + 2 H(+). Its function is as follows. Allows the formation of correctly charged Asn-tRNA(Asn) or Gln-tRNA(Gln) through the transamidation of misacylated Asp-tRNA(Asn) or Glu-tRNA(Gln) in organisms which lack either or both of asparaginyl-tRNA or glutaminyl-tRNA synthetases. The reaction takes place in the presence of glutamine and ATP through an activated phospho-Asp-tRNA(Asn) or phospho-Glu-tRNA(Gln). This Chlorobium phaeovibrioides (strain DSM 265 / 1930) (Prosthecochloris vibrioformis (strain DSM 265)) protein is Aspartyl/glutamyl-tRNA(Asn/Gln) amidotransferase subunit C.